The sequence spans 1151 residues: Zinc finger protein ZFPM2 (1151 aa).

Positions 1–13 are enriched in basic residues; the sequence is MSRRKQSKPRQIK. The segment at 1-102 is disordered; the sequence is MSRRKQSKPR…ETDDWDGPGE (102 aa). Composition is skewed to acidic residues over residues 18–33 and 70–82; these read DAIEDEEEECPSEETD and EGIQETAESDGDT. The segment at 244–277 adopts a CCHC FOG-type 1 zinc-finger fold; it reads IVNKDIFPCKSCGIWYRSERNLQAHLMYYCSGRQ. Residues Cys252, Cys255, His268, and Cys273 each coordinate Zn(2+). Residues 296 to 320 form a C2H2-type 1 zinc finger; it reads SLCPFPQCTKSFSNARALEMHLNSH. Residue Lys324 forms a Glycyl lysine isopeptide (Lys-Gly) (interchain with G-Cter in SUMO1) linkage. 2 C2H2-type zinc fingers span residues 335–357 and 363–385; these read LKCTVCSYTADSVINFHQHLFSH and FRCNHCHFGFQTQRELLQHQELH. The interval 389-487 is disordered; it reads GKLPRESDME…RLASSPVQPN (99 aa). Polar residues-rich tracts occupy residues 401–410 and 419–431; these read PSATEDSLQP and ELPQSQKAMQTKD. A Glycyl lysine isopeptide (Lys-Gly) (interchain with G-Cter in SUMO2) cross-link involves residue Lys444. Residues 447–485 show a composition bias toward polar residues; sequence LFLTNQRPEIQPTTNKQSFSYTKIKSEPSSPRLASSPVQ. Lys471 is covalently cross-linked (Glycyl lysine isopeptide (Lys-Gly) (interchain with G-Cter in SUMO1)). The residue at position 532 (Ser532) is a Phosphoserine. The CCHC FOG-type 2 zinc-finger motif lies at 542-575; sequence PLMPKGATCFECNITFNNLDNYLVHKKHYCSSRW. Zn(2+) contacts are provided by Cys550, Cys553, His566, and Cys571. Ser581 carries the phosphoserine modification. The tract at residues 636 to 683 is disordered; that stretch reads GPNGKGHDKDFSTQTKKLSTSSNNDDKINGKPVDVKNPSVPLVDGESD. Residues 647 to 658 show a composition bias toward polar residues; it reads STQTKKLSTSSN. Residues 681–714 form a CCHC FOG-type 3 zinc finger; sequence ESDPNKTTCEACNITFSRHETYMVHKQYYCATRH. Residues Cys689, Cys692, His705, and Cys710 each coordinate Zn(2+). A Nuclear localization signal motif is present at residues 736 to 740; sequence RKRRK. Residues 829–835 are interaction with CTBP2; it reads PIDLSKK. The CCHC FOG-type 4 zinc finger occupies 848 to 881; it reads KRLLDYHECTVCKISFNKVENYLAHKQNFCPVTA. Zn(2+) is bound by residues Cys856, Cys859, His872, and Cys877. Ser904 is subject to Phosphoserine. Glycyl lysine isopeptide (Lys-Gly) (interchain with G-Cter in SUMO1) cross-links involve residues Lys915 and Lys955. Phosphoserine is present on Ser1014. The tract at residues 1051-1095 is disordered; it reads DERPAANPQQENISQNPQHEDDHKSPSWISENPLAANENVSPGIP. Over residues 1057–1067 the composition is skewed to polar residues; the sequence is NPQQENISQNP. The segment at 1113–1146 adopts a CCHC FOG-type 5 zinc-finger fold; that stretch reads QAPTSGKYCRLCDIQFNNLSNFITHKKFYCSSHA. 4 residues coordinate Zn(2+): Cys1121, Cys1124, His1137, and Cys1142.

The protein belongs to the FOG (Friend of GATA) family. In terms of assembly, interacts with the N-terminal zinc-finger of GATA4, GATA5 and probably GATA6. Interacts with retinoid nuclear receptor RXRA when ligand bound. Interacts with corepressor CTBP2; this interaction is however not essential for corepressor activity. Able to bind GATA1 in vitro. Interacts with NR2F2 and NR2F6. Interacts with ATOH8; mediates indirect interaction with GATA4. Sumoylation reduces transcriptional repression activity. As to expression, widely expressed at low level.

The protein localises to the nucleus. Its function is as follows. Transcription regulator that plays a central role in heart morphogenesis and development of coronary vessels from epicardium, by regulating genes that are essential during cardiogenesis. Essential cofactor that acts via the formation of a heterodimer with transcription factors of the GATA family GATA4, GATA5 and GATA6. Such heterodimer can both activate or repress transcriptional activity, depending on the cell and promoter context. Also required in gonadal differentiation, possibly be regulating expression of SRY. Probably acts a corepressor of NR2F2. The protein is Zinc finger protein ZFPM2 (ZFPM2) of Homo sapiens (Human).